Reading from the N-terminus, the 230-residue chain is Lecithin retinol acyltransferase (230 aa).

Topologically, residues 1 to 194 (MKNPMLEVVS…VKIIIRDQRS (194 aa)) are cytoplasmic. The 128-residue stretch at 50-177 (VLEVPRTHLT…CRYGTPISPQ (128 aa)) folds into the LRAT domain. Active-site residues include His60 and His72. Residue Cys161 is the Acyl-thioester intermediate of the active site. The helical transmembrane segment at 195–215 (VLASAVLGLASIVCTGLVSYT) threads the bilayer. Residues 216 to 230 (TLPAIFIPFFLWMAG) lie on the Lumenal side of the membrane.

The protein belongs to the H-rev107 family. As to expression, hepatic stellate cells and endothelial cells (at protein level). Found at high levels in testis and liver, followed by retinal pigment epithelium, small intestine, prostate, pancreas and colon. Low expression observed in brain. In fetal tissues, expressed in retinal pigment epithelium and liver, and barely in the brain.

It localises to the endoplasmic reticulum membrane. The protein localises to the rough endoplasmic reticulum. The protein resides in the endosome. It is found in the multivesicular body. Its subcellular location is the cytoplasm. It localises to the perinuclear region. It catalyses the reaction all-trans-retinol--[retinol-binding protein] + a 1,2-diacyl-sn-glycero-3-phosphocholine = apo--[retinol-binding protein] + an all-trans-retinyl ester + a 2-acyl-sn-glycero-3-phosphocholine. It carries out the reaction 1,2-dihexadecanoyl-sn-glycero-3-phosphocholine + all-trans-retinol = all-trans-retinyl hexadecanoate + 2-hexadecanoyl-sn-glycero-3-phosphocholine. The enzyme catalyses 1,2-diheptanoyl-sn-glycero-3-phosphocholine + all-trans-retinol--[retinol-binding protein] = all-trans-retinyl heptanoate + 2-heptanoyl-sn-glycero-3-phosphocholine + apo--[retinol-binding protein]. The catalysed reaction is 1,2-dioctanoyl-sn-glycero-3-phosphocholine + all-trans-retinol--[retinol-binding protein] = 2-octanoyl-sn-glycero-3-phosphocholine + all-trans-retinyl octanoate + apo--[retinol-binding protein]. It catalyses the reaction all-trans-retinol--[retinol-binding protein] + 1,2-dihexadecanoyl-sn-glycero-3-phosphocholine = apo--[retinol-binding protein] + all-trans-retinyl hexadecanoate + 2-hexadecanoyl-sn-glycero-3-phosphocholine. It carries out the reaction 1,2-didodecanoyl-sn-glycero-3-phosphocholine + all-trans-retinol--[retinol-binding protein] = 2-dodecanoyl-sn-glycero-3-phosphocholine + all-trans-retinyl dodecanoate + apo--[retinol-binding protein]. Its pathway is cofactor metabolism; retinol metabolism. Its activity is regulated as follows. Inhibited by all-trans-retinyl alpha-bromoacetate and N-boc-L-biocytinyl-11-aminoundecane chloro-methyl ketone (BACMK). Its function is as follows. Transfers the acyl group from the sn-1 position of phosphatidylcholine to all-trans retinol, producing all-trans retinyl esters. Retinyl esters are storage forms of vitamin A. LRAT plays a critical role in vision. It provides the all-trans retinyl ester substrates for the isomerohydrolase which processes the esters into 11-cis-retinol in the retinal pigment epithelium; due to a membrane-associated alcohol dehydrogenase, 11 cis-retinol is oxidized and converted into 11-cis-retinaldehyde which is the chromophore for rhodopsin and the cone photopigments. Required for the survival of cone photoreceptors and correct rod photoreceptor cell morphology. The sequence is that of Lecithin retinol acyltransferase from Homo sapiens (Human).